The following is a 61-amino-acid chain: UPF0391 membrane protein Aave_0978 (61 aa).

2 helical membrane-spanning segments follow: residues 5-25 and 33-53; these read AIIFAIISLIAGALGFSGVAA and ILFFLFLVVAVIFIVLAVLGV.

The protein belongs to the UPF0391 family.

It localises to the cell membrane. The protein is UPF0391 membrane protein Aave_0978 of Paracidovorax citrulli (strain AAC00-1) (Acidovorax citrulli).